We begin with the raw amino-acid sequence, 96 residues long: Co-chaperonin GroES (96 aa).

The protein belongs to the GroES chaperonin family. As to quaternary structure, heptamer of 7 subunits arranged in a ring. Interacts with the chaperonin GroEL.

It localises to the cytoplasm. In terms of biological role, together with the chaperonin GroEL, plays an essential role in assisting protein folding. The GroEL-GroES system forms a nano-cage that allows encapsulation of the non-native substrate proteins and provides a physical environment optimized to promote and accelerate protein folding. GroES binds to the apical surface of the GroEL ring, thereby capping the opening of the GroEL channel. The chain is Co-chaperonin GroES from Aliivibrio fischeri (strain ATCC 700601 / ES114) (Vibrio fischeri).